The following is a 66-amino-acid chain: Beta-toxin Cbo1 (66 aa).

The LCN-type CS-alpha/beta domain occupies 1–66 (KEGYLVNHST…VWPLPKKTCN (66 aa)). 4 disulfides stabilise this stretch: cysteine 12-cysteine 65, cysteine 16-cysteine 41, cysteine 25-cysteine 46, and cysteine 29-cysteine 48. Asparagine 66 carries the asparagine amide modification.

The protein belongs to the long (4 C-C) scorpion toxin superfamily. Sodium channel inhibitor family. Beta subfamily. Expressed by the venom gland.

The protein localises to the secreted. Beta toxins bind voltage-independently at site-4 of sodium channels and shift the voltage of activation toward more negative potentials thereby affecting sodium channel activation and promoting spontaneous and repetitive firing. Is active on the human voltage-gated sodium channel Nav1.6/SCN8A when tested at 200 nM. In vivo, is toxic to mice when intraperitoneally injected. This is Beta-toxin Cbo1 from Centruroides bonito (Scorpion).